Reading from the N-terminus, the 23-residue chain is Dermaseptin III-like peptide (23 aa).

As to expression, expressed by the skin glands.

It localises to the secreted. Possesses a potent antimicrobial activity against bacteria, fungi and protozoa. Probably acts by disturbing membrane functions with its amphipathic structure. The chain is Dermaseptin III-like peptide from Phyllomedusa burmeisteri (Brazilian common walking leaf frog).